A 645-amino-acid polypeptide reads, in one-letter code: Matrix metalloproteinase-24 (645 aa).

Low complexity predominate over residues 1–10 (MPRSRGGRAA). The segment at 1–26 (MPRSRGGRAAPGPPPPPPPPGQAPRW) is disordered. The first 52 residues, 1-52 (MPRSRGGRAAPGPPPPPPPPGQAPRWSRWRVPGRLLLLLLPALCCLPGAARA), serve as a signal peptide directing secretion. Positions 11-22 (PGPPPPPPPPGQ) are enriched in pro residues. Positions 53-155 (AAAAAGAGNR…HLSRRRRNKR (103 aa)) are excised as a propeptide. At 53–602 (AAAAAGAGNR…INDVPGSVNA (550 aa)) the chain is on the extracellular side. The short motif at 137–144 (PRCGVPDH) is the Cysteine switch element. Cys-139 and His-282 together coordinate Zn(2+). The active site involves Glu-283. Positions 286 and 292 each coordinate Zn(2+). Residues 323–380 (QKIYGPPAEPLEPTRPLPTLPVRRIHSPSERKHERQPRPPRPPLGDRPSTPGTKPNIC) form a disordered region. Positions 329–341 (PAEPLEPTRPLPT) are enriched in pro residues. Over residues 349–359 (SPSERKHERQP) the composition is skewed to basic and acidic residues. Hemopexin repeat units follow at residues 377–425 (PNIC…WKGL), 426–471 (PARI…GSCL), 473–521 (REGI…KGIP), and 522–569 (QAPQ…WMGC). Cys-380 and Cys-569 form a disulfide bridge. Residues 603 to 623 (VAVVIPCILSLCILVLVYTIF) form a helical membrane-spanning segment. At 624–645 (QFKNKTGPQPVTYYKRPVQEWV) the chain is on the cytoplasmic side. The PDZ-binding signature appears at 643–645 (EWV).

It belongs to the peptidase M10A family. As to quaternary structure, interacts (via PDZ-binding motif) with APBA3 (via PDZ domain). Interacts with GRIP1 and GRIP2. It depends on Zn(2+) as a cofactor. Ca(2+) serves as cofactor. Cleaved by a furin endopeptidase in the trans-Golgi network. In terms of tissue distribution, predominantly expressed in brain, kidney, pancreas and lung. Overexpressed in a series of brain tumors, including astrocytomas and glioblastomas.

Its subcellular location is the cell membrane. The protein localises to the golgi apparatus. It is found in the trans-Golgi network membrane. It localises to the secreted. The protein resides in the extracellular space. Its subcellular location is the extracellular matrix. In terms of biological role, metalloprotease that mediates cleavage of N-cadherin (CDH2) and acts as a regulator of neuro-immune interactions and neural stem cell quiescence. Involved in cell-cell interactions between nociceptive neurites and mast cells, possibly by mediating cleavage of CDH2, thereby acting as a mediator of peripheral thermal nociception and inflammatory hyperalgesia. Key regulator of neural stem cells quiescence by mediating cleavage of CDH2, affecting CDH2-mediated anchorage of neural stem cells to ependymocytes in the adult subependymal zone, leading to modulate their quiescence. May play a role in axonal growth. Able to activate progelatinase A. May also be a proteoglycanase involved in degradation of proteoglycans, such as dermatan sulfate and chondroitin sulfate proteoglycans. Cleaves partially fibronectin, but not collagen type I, nor laminin. The protein is Matrix metalloproteinase-24 (MMP24) of Homo sapiens (Human).